Consider the following 382-residue polypeptide: Protein RecA (382 aa).

79-86 provides a ligand contact to ATP; the sequence is GPESSGKT.

Belongs to the RecA family.

The protein localises to the cytoplasm. Its function is as follows. Can catalyze the hydrolysis of ATP in the presence of single-stranded DNA, the ATP-dependent uptake of single-stranded DNA by duplex DNA, and the ATP-dependent hybridization of homologous single-stranded DNAs. It interacts with LexA causing its activation and leading to its autocatalytic cleavage. In Streptococcus sanguinis (strain SK36), this protein is Protein RecA.